We begin with the raw amino-acid sequence, 560 residues long: Endogenous retrovirus group K member 18 Env polyprotein (560 aa).

The segment at phenylalanine 355–valine 375 is fusion peptide. The chain crosses the membrane as a helical span at residues isoleucine 522–leucine 542.

Belongs to the beta type-B retroviral envelope protein family. HERV class-II K(HML-2) env subfamily. In terms of assembly, the surface (SU) and transmembrane (TM) proteins form a heterodimer. SU and TM are attached by noncovalent interactions or by a labile interchain disulfide bond. In terms of processing, specific enzymatic cleavages in vivo yield the mature SU and TM proteins. Expressed at higher level in the thymus. Expressed at lower level in peripheral blood lymphocytes.

The protein localises to the cell membrane. It localises to the virion. Functionally, retroviral envelope proteins mediate receptor recognition and membrane fusion during early infection. Endogenous envelope proteins may have kept, lost or modified their original function during evolution. This envelope protein has superantigenic properties. Its function is as follows. SU mediates receptor recognition. TM anchors the envelope heterodimer to the viral membrane through one transmembrane domain. The other hydrophobic domain, called fusion peptide, mediates fusion of the viral membrane with the target cell membrane. In Homo sapiens (Human), this protein is Endogenous retrovirus group K member 18 Env polyprotein (ERVK-18).